A 221-amino-acid chain; its full sequence is Protein-L-isoaspartate O-methyltransferase (221 aa).

Ser57 is a catalytic residue.

The protein belongs to the methyltransferase superfamily. L-isoaspartyl/D-aspartyl protein methyltransferase family.

It is found in the cytoplasm. It carries out the reaction [protein]-L-isoaspartate + S-adenosyl-L-methionine = [protein]-L-isoaspartate alpha-methyl ester + S-adenosyl-L-homocysteine. In terms of biological role, catalyzes the methyl esterification of L-isoaspartyl residues in peptides and proteins that result from spontaneous decomposition of normal L-aspartyl and L-asparaginyl residues. It plays a role in the repair and/or degradation of damaged proteins. The sequence is that of Protein-L-isoaspartate O-methyltransferase from Korarchaeum cryptofilum (strain OPF8).